A 255-amino-acid chain; its full sequence is MGKFEQKERERISTFSFPTTGSQSSTSIKSLGSPLYGRFSSLSSTESQFDSSKQPHEYEKSFYFEESQGEALFNKLKTYSFPGDKDGVKTRRNSSICPRKPNAVSPLRVESNELSSHSHSRSLSHELTKPSGRRKSYHRKSHAISFSRSCKPNFIDGYDSNSSIGVNSRKTSLASSFLDKEYHSSPDTSYTHQMSPKNTIMNTNEQLRRNASGRFGSLKEFAEKNQINIEGKIFAHKVETGDILQPLIDLDIDNK.

Positions 1 to 12 (MGKFEQKERERI) are enriched in basic and acidic residues. 2 disordered regions span residues 1-32 (MGKFEQKERERISTFSFPTTGSQSSTSIKSLG) and 82-142 (PGDK…RKSH). Residues 13-30 (STFSFPTTGSQSSTSIKS) are compositionally biased toward polar residues. The span at 131–142 (SGRRKSYHRKSH) shows a compositional bias: basic residues. At S217 the chain carries Phosphoserine.

In Saccharomyces cerevisiae (strain ATCC 204508 / S288c) (Baker's yeast), this protein is Increased copper sensitivity protein 2 (ICS2).